The following is a 545-amino-acid chain: MAAKEVVFGNDARVRMLAGVNILANAVKVTLGPKGRNVVLDKSFGSPLITKDGVSVAKEIELEDKFENMGAQMVKEVASKANDAAGDGTTTATVLAQAIVVEGLKAVAAGMNPMDLKRGIDKAVIAAVAELKALSQPCADSKAIAQVATISANSDESIGEIIATAMEKVGKEGVITVEEGQALENELDVVEGMQFDRGYLSPYFINKPETGSVELDHPFVLLVDKKISNIRELLPILEGLAKTGKPLLIVAEDVEGEALATLVVNNMRGIVKVAAVKAPGFGDRRKAMLQDVAILTGGTVIAEEIGLELEKATLEDLGTAKRVVITKDNTTIIDGNGEQTQIAARVSQIKQQVEESTSDYDKEKLQERMAKLAGGVAVIKVGAATEVEMKEKKARVEDALHATRAAVEEGVVPGGGVALVRVASKIADVEVLNEDQKHGVVIALRAMEAPLRQIATNAGEEASVVANTVKNGSGNYGYNAGNDTYGDMLEMGILDPTKVTRCALQFAASIAGLMITTEAMVAEIPQNASQDMGGMGGMGGMGGMM.

ATP is bound by residues 30-33 (TLGP), K51, 87-91 (DGTTT), G415, and D495.

Belongs to the chaperonin (HSP60) family. In terms of assembly, forms a cylinder of 14 subunits composed of two heptameric rings stacked back-to-back. Interacts with the co-chaperonin GroES.

The protein resides in the cytoplasm. The enzyme catalyses ATP + H2O + a folded polypeptide = ADP + phosphate + an unfolded polypeptide.. In terms of biological role, together with its co-chaperonin GroES, plays an essential role in assisting protein folding. The GroEL-GroES system forms a nano-cage that allows encapsulation of the non-native substrate proteins and provides a physical environment optimized to promote and accelerate protein folding. The chain is Chaperonin GroEL from Shewanella baltica (strain OS185).